Consider the following 593-residue polypeptide: CTD kinase subunit alpha (593 aa).

Polar residues-rich tracts occupy residues 1-17 (MSYS…TEPN) and 29-51 (QLSG…FKNN). Residues 1–262 (MSYSKSTIYR…ESVPAPLPSP (262 aa)) are disordered. 2 positions are modified to phosphoserine: serine 56 and serine 58. Positions 90-103 (RSRKSRRRKGKKAF) are enriched in basic residues. Phosphoserine occurs at positions 104 and 109. Residues 139-152 (SSSSASVSPISPSA) show a composition bias toward low complexity. Positions 160-170 (QASSFRRSPPS) are enriched in polar residues. Residues 198–215 (IPHETTSSDTQKKSSVSS) show a composition bias toward low complexity. In terms of domain architecture, Protein kinase spans 277–561 (YEKIDQIGEG…AHETLMHEYF (285 aa)). Residues 283 to 291 (IGEGTYGKV) and lysine 306 each bind ATP. Aspartate 399 functions as the Proton acceptor in the catalytic mechanism.

Belongs to the protein kinase superfamily. CMGC Ser/Thr protein kinase family. CDC2/CDKX subfamily. CTDK-I consists of three subunits, ctk1/lsk1, ctk2/lsc1 and ctk3 (also called alpha, beta and gamma). Interacts with ctk2/lsc1. This interaction is dependent on kinase activity.

It is found in the nucleus. Its subcellular location is the nucleolus. It carries out the reaction [DNA-directed RNA polymerase] + ATP = phospho-[DNA-directed RNA polymerase] + ADP + H(+). Functionally, catalytic subunit of the CTDK-I complex, which hyperphosphorylates the C-terminal heptapeptide repeat domain (CTD) of the largest RNA polymerase II subunit. Involved in RNA polymerase II transcriptional elongation and pre-mRNA 3'-end processing. Together with ctk2/lsc1, required for the regulation of cytokinesis by phosphorylating 'Ser-2' residues found in the heptad repeats of the CTD. Required for nuclear localization of ctk2/lsc1. Positively regulates the septation initiation network (SIN) and promotes successful completion of cytokinesis in response to perturbation of the actomyosin ring. Acts in parallel to clp1 to promote actomyosin ring stability upon cytokinesis checkpoint activation. In Schizosaccharomyces pombe (strain 972 / ATCC 24843) (Fission yeast), this protein is CTD kinase subunit alpha.